The chain runs to 295 residues: Pyridoxal 5'-phosphate synthase subunit PdxS (295 aa).

Position 25 (D25) interacts with D-ribose 5-phosphate. K82 acts as the Schiff-base intermediate with D-ribose 5-phosphate in catalysis. G154 is a binding site for D-ribose 5-phosphate. A D-glyceraldehyde 3-phosphate-binding site is contributed by R166. D-ribose 5-phosphate-binding positions include G215 and 236–237 (GS).

Belongs to the PdxS/SNZ family. In the presence of PdxT, forms a dodecamer of heterodimers.

The catalysed reaction is aldehydo-D-ribose 5-phosphate + D-glyceraldehyde 3-phosphate + L-glutamine = pyridoxal 5'-phosphate + L-glutamate + phosphate + 3 H2O + H(+). Its pathway is cofactor biosynthesis; pyridoxal 5'-phosphate biosynthesis. Functionally, catalyzes the formation of pyridoxal 5'-phosphate from ribose 5-phosphate (RBP), glyceraldehyde 3-phosphate (G3P) and ammonia. The ammonia is provided by the PdxT subunit. Can also use ribulose 5-phosphate and dihydroxyacetone phosphate as substrates, resulting from enzyme-catalyzed isomerization of RBP and G3P, respectively. In Staphylococcus epidermidis (strain ATCC 35984 / DSM 28319 / BCRC 17069 / CCUG 31568 / BM 3577 / RP62A), this protein is Pyridoxal 5'-phosphate synthase subunit PdxS.